Reading from the N-terminus, the 417-residue chain is NADH-quinone oxidoreductase subunit D (417 aa).

The protein belongs to the complex I 49 kDa subunit family. As to quaternary structure, NDH-1 is composed of 14 different subunits. Subunits NuoB, C, D, E, F, and G constitute the peripheral sector of the complex.

Its subcellular location is the cell inner membrane. The catalysed reaction is a quinone + NADH + 5 H(+)(in) = a quinol + NAD(+) + 4 H(+)(out). NDH-1 shuttles electrons from NADH, via FMN and iron-sulfur (Fe-S) centers, to quinones in the respiratory chain. The immediate electron acceptor for the enzyme in this species is believed to be ubiquinone. Couples the redox reaction to proton translocation (for every two electrons transferred, four hydrogen ions are translocated across the cytoplasmic membrane), and thus conserves the redox energy in a proton gradient. This Nitrosococcus oceani (strain ATCC 19707 / BCRC 17464 / JCM 30415 / NCIMB 11848 / C-107) protein is NADH-quinone oxidoreductase subunit D.